Reading from the N-terminus, the 429-residue chain is Glutamate-1-semialdehyde 2,1-aminomutase 2 (429 aa).

The residue at position 268 (lysine 268) is an N6-(pyridoxal phosphate)lysine.

This sequence belongs to the class-III pyridoxal-phosphate-dependent aminotransferase family. HemL subfamily. In terms of assembly, homodimer. Requires pyridoxal 5'-phosphate as cofactor.

The protein localises to the cytoplasm. It carries out the reaction (S)-4-amino-5-oxopentanoate = 5-aminolevulinate. It participates in porphyrin-containing compound metabolism; protoporphyrin-IX biosynthesis; 5-aminolevulinate from L-glutamyl-tRNA(Glu): step 2/2. The chain is Glutamate-1-semialdehyde 2,1-aminomutase 2 from Staphylococcus epidermidis (strain ATCC 35984 / DSM 28319 / BCRC 17069 / CCUG 31568 / BM 3577 / RP62A).